The primary structure comprises 157 residues: MATMHDKITLQLPAKPEYVSLGRLSLSGIASRAGFSYEAIEDLKIAVSEAITNSVKHAFKGEEDGEITVEYLIYEDKLEVRVSDNGTSFDLETRKQEIGPYDVGEDAEMMRIGGLGLFLIETLMDDVKLYYDEGVSVVMTKYINEKQVEENAKSIST.

It belongs to the anti-sigma-factor family.

It catalyses the reaction L-seryl-[protein] + ATP = O-phospho-L-seryl-[protein] + ADP + H(+). The enzyme catalyses L-threonyl-[protein] + ATP = O-phospho-L-threonyl-[protein] + ADP + H(+). Its function is as follows. Negative regulator of sigma-B activity. Phosphorylates and inactivates its specific antagonist protein, RsbV. Upon phosphorylation of RsbV, RsbW is released and binds to sigma-B, thereby blocking its ability to form an RNA polymerase holoenzyme (E-sigma-B). The sequence is that of Serine-protein kinase RsbW from Listeria monocytogenes serovar 1/2a (strain ATCC BAA-679 / EGD-e).